An 84-amino-acid chain; its full sequence is Cytochrome b559 subunit alpha (84 aa).

A helical membrane pass occupies residues 22 to 36 (IIHSITIPSLFVSGW). H24 is a heme binding site.

Belongs to the PsbE/PsbF family. Heterodimer of an alpha subunit and a beta subunit. PSII is composed of 1 copy each of membrane proteins PsbA, PsbB, PsbC, PsbD, PsbE, PsbF, PsbH, PsbI, PsbJ, PsbK, PsbL, PsbM, PsbT, PsbX, PsbY, PsbZ, Psb30/Ycf12, at least 3 peripheral proteins of the oxygen-evolving complex and a large number of cofactors. It forms dimeric complexes. The cofactor is heme b.

It is found in the plastid. It localises to the chloroplast thylakoid membrane. This b-type cytochrome is tightly associated with the reaction center of photosystem II (PSII). PSII is a light-driven water:plastoquinone oxidoreductase that uses light energy to abstract electrons from H(2)O, generating O(2) and a proton gradient subsequently used for ATP formation. It consists of a core antenna complex that captures photons, and an electron transfer chain that converts photonic excitation into a charge separation. In Phaeodactylum tricornutum (strain CCAP 1055/1), this protein is Cytochrome b559 subunit alpha.